Reading from the N-terminus, the 383-residue chain is Lipid-A-disaccharide synthase (383 aa).

This sequence belongs to the LpxB family.

The enzyme catalyses a lipid X + a UDP-2-N,3-O-bis[(3R)-3-hydroxyacyl]-alpha-D-glucosamine = a lipid A disaccharide + UDP + H(+). The protein operates within bacterial outer membrane biogenesis; LPS lipid A biosynthesis. Functionally, condensation of UDP-2,3-diacylglucosamine and 2,3-diacylglucosamine-1-phosphate to form lipid A disaccharide, a precursor of lipid A, a phosphorylated glycolipid that anchors the lipopolysaccharide to the outer membrane of the cell. The chain is Lipid-A-disaccharide synthase from Anaeromyxobacter sp. (strain K).